The sequence spans 474 residues: tRNA (adenine(58)-N(1))-methyltransferase catalytic subunit trm61 (474 aa).

Residues aspartate 75 to alanine 109 are disordered. S-adenosyl-L-methionine is bound by residues serine 163 to serine 165, glutamate 197, arginine 202, aspartate 225 to valine 226, and aspartate 250. Disordered stretches follow at residues leucine 356–tyrosine 390 and aspartate 423–glutamate 474. The segment covering arginine 358–aspartate 367 has biased composition (polar residues). The segment covering aspartate 423–proline 432 has biased composition (basic and acidic residues). The span at asparagine 434 to glutamine 443 shows a compositional bias: polar residues. Over residues lysine 450–glutamate 474 the composition is skewed to basic and acidic residues.

The protein belongs to the class I-like SAM-binding methyltransferase superfamily. TRM61 family. As to quaternary structure, heterotetramer; composed of two copies of TRM6 and two copies of TRM61.

The protein localises to the nucleus. It catalyses the reaction adenosine(58) in tRNA + S-adenosyl-L-methionine = N(1)-methyladenosine(58) in tRNA + S-adenosyl-L-homocysteine + H(+). Functionally, catalytic subunit of tRNA (adenine-N(1)-)-methyltransferase, which catalyzes the formation of N(1)-methyladenine at position 58 (m1A58) in initiator methionyl-tRNA. This chain is tRNA (adenine(58)-N(1))-methyltransferase catalytic subunit trm61 (trm61), found in Aspergillus oryzae (strain ATCC 42149 / RIB 40) (Yellow koji mold).